Consider the following 67-residue polypeptide: MKTQFAILLITLVLFQMFSQSDAILGKIWEGIKSIFGKRGLNDLSDLDELFDGEISEADVDFLREIM.

Residues 1–23 form the signal peptide; sequence MKTQFAILLITLVLFQMFSQSDA. Position 36 is a phenylalanine amide (F36). A propeptide spanning residues 40-67 is cleaved from the precursor; that stretch reads GLNDLSDLDELFDGEISEADVDFLREIM.

It belongs to the non-disulfide-bridged peptide (NDBP) superfamily. Short antimicrobial peptide (group 4) family. As to expression, expressed by the venom gland.

The protein resides in the secreted. It is found in the target cell membrane. Its function is as follows. Amphipathic peptide with antibacterial activities. Shows antiviral activities against the herpes simplex virus type-1. It potently inhibits the initial infection by provoking the rupture of viral envelop and the dissociation of proteins from the virions (EC(50) is 0.43 uM). It also effectively inhibits viral attachment (EC(50) is 2.87 uM), viral entry (EC(50) is 4.29 uM) and viral proliferation after infection (EC(50) is 7.86). Morever, it enters mammalian tested cells (Vero) and reduces the intracellular infectivity. In Heterometrus petersii (Asian forest scorpion), this protein is Peptide Hp1036.